The following is a 215-amino-acid chain: Adenylate kinase (215 aa).

10 to 15 (GAGKGT) lines the ATP pocket. Positions 30-59 (STGDILRENVKNQTELGKKAKEYMDKGLLV) are NMP. Residues Thr-31, Arg-36, 57–59 (LLV), 85–88 (GFPR), and Gln-92 contribute to the AMP site. The tract at residues 126–163 (GRRICKSCGASFHVVYRPPKKEGICDICGGQLYQREDD) is LID. An ATP-binding site is contributed by Arg-127. 2 residues coordinate Zn(2+): Cys-130 and Cys-133. ATP is bound at residue 136-137 (SF). Zn(2+) is bound by residues Cys-150 and Cys-153. AMP-binding residues include Arg-160 and Arg-171. Glu-199 contributes to the ATP binding site.

It belongs to the adenylate kinase family. Monomer.

Its subcellular location is the cytoplasm. The catalysed reaction is AMP + ATP = 2 ADP. Its pathway is purine metabolism; AMP biosynthesis via salvage pathway; AMP from ADP: step 1/1. Its function is as follows. Catalyzes the reversible transfer of the terminal phosphate group between ATP and AMP. Plays an important role in cellular energy homeostasis and in adenine nucleotide metabolism. The sequence is that of Adenylate kinase from Caldicellulosiruptor saccharolyticus (strain ATCC 43494 / DSM 8903 / Tp8T 6331).